Here is a 392-residue protein sequence, read N- to C-terminus: uncharacterized protein (392 aa).

The protein belongs to the glycosyltransferase group 1 family. Glycosyltransferase 4 subfamily.

This is an uncharacterized protein from Methanocaldococcus jannaschii (strain ATCC 43067 / DSM 2661 / JAL-1 / JCM 10045 / NBRC 100440) (Methanococcus jannaschii).